The chain runs to 509 residues: Tyrosine-protein kinase Lck (509 aa).

Residue G2 is the site of N-myristoyl glycine attachment. Residues 2 to 72 are interactions with CD4 and CD8; it reads GCGCSSHPED…DNLVIALHSY (71 aa). S-palmitoyl cysteine attachment occurs at residues C3 and C5. Residues 61–121 form the SH3 domain; sequence LQDNLVIALH…PFNFVAKANS (61 aa). Residue K99 forms a Glycyl lysine isopeptide (Lys-Gly) (interchain with G-Cter in ubiquitin) linkage. Position 102 is a phosphoserine (S102). The SH2 domain maps to 127 to 224; the sequence is WFFKNLSRKD…GLCTRLSRPC (98 aa). The tract at residues 154 to 242 is interaction with PTPRH; that stretch reads RESESTAGSF…WWEDEWEVPR (89 aa). A Phosphothreonine modification is found at T159. At S162 the chain carries Phosphoserine. A Phosphotyrosine modification is found at Y192. S194 is subject to Phosphoserine. The Protein kinase domain maps to 245–498; the sequence is LKLVERLGAG…YLRSVLEDFF (254 aa). ATP is bound by residues 251–259 and K273; that span reads LGAGQFGEV. K276 is covalently cross-linked (Glycyl lysine isopeptide (Lys-Gly) (interchain with G-Cter in ubiquitin)). The active-site Proton acceptor is D364. Y394 is subject to Phosphotyrosine; by autocatalysis. Position 505 is a phosphotyrosine; by CSK (Y505).

The protein belongs to the protein kinase superfamily. Tyr protein kinase family. SRC subfamily. Binds to the cytoplasmic domain of cell surface receptors, such as AXL, CD2, CD4, CD5, CD8, CD44, CD45 and CD122. Also binds to effector molecules, such as PI4K, VAV1, RASA1, FYB1 and to other protein kinases including CDK1, RAF1, ZAP70 and SYK. Binds to phosphatidylinositol 3'-kinase (PI3K) from T-lymphocytes through its SH3 domain and to the tyrosine phosphorylated form of KHDRBS1/p70 through its SH2 domain. Interacts with SQSTM1. Interacts with phosphorylated LIME1. LIME1. Interacts with CBLB and PTPRH. Interacts with RUNX3. Forms a signaling complex with EPHA1, PTK2B and PI3-KINASE; upon activation by EFNA1 which may regulate T-lymphocytes migration. Associates with ZAP70 and RHOH; these interactions allow LCK-mediated RHOH and CD3 subunit phosphorylation in the presence of functional ZAP70. Interacts with CEACAM1 (via cytoplasmic domain); mediates CEACAM1 phosphorylation resulting in PTPN6 recruitment that dephosphorylates TCR stimulation-induced CD247 and ZAP70. Interacts with CD160. Interacts with CD48. Autophosphorylated on Tyr-394, increasing enzymatic activity, this site is dephosphorylated by PTN22. Phosphorylated on Tyr-505 by CSK, decreasing activity. Dephosphorylated by PTPRC/CD45. Dephosphorylation at Tyr-394 by PTPN2 negatively regulates T-cells differentiation. Dephosphorylation at Tyr-394 by DUSP22 negatively regulates T-cell receptor signaling. Post-translationally, myristoylation is required prior to palmitoylation. In terms of processing, palmitoylation regulates association with the plasma membrane and could be mediated by ZDHHC2. 'Lys-63'-linked ubiquitinated at Lys-99 and Lys-276 by UBR2; this modification is required for autophosphorylation at Tyr-394.

It is found in the cell membrane. The protein localises to the cytoplasm. Its subcellular location is the cytosol. The catalysed reaction is L-tyrosyl-[protein] + ATP = O-phospho-L-tyrosyl-[protein] + ADP + H(+). With respect to regulation, the relative activities of the inhibitory tyrosine-protein kinase CSK and the activating tyrosine-protein phosphatase PTPRC/CD45 determine the level of LCK activity. These interactions allow rapid and efficient activation of LCK in response to TCR stimulation. Functionally, non-receptor tyrosine-protein kinase that plays an essential role in the selection and maturation of developing T-cells in the thymus and in the function of mature T-cells. Plays a key role in T-cell antigen receptor (TCR)-linked signal transduction pathways. Constitutively associated with the cytoplasmic portions of the CD4 and CD8 surface receptors. Association of the TCR with a peptide antigen-bound MHC complex facilitates the interaction of CD4 and CD8 with MHC class II and class I molecules, respectively, thereby recruiting the associated LCK protein to the vicinity of the TCR/CD3 complex. LCK then phosphorylates tyrosine residues within the immunoreceptor tyrosine-based activation motifs (ITAM) of the cytoplasmic tails of the TCR-gamma chains and CD3 subunits, initiating the TCR/CD3 signaling pathway. Once stimulated, the TCR recruits the tyrosine kinase ZAP70, that becomes phosphorylated and activated by LCK. Following this, a large number of signaling molecules are recruited, ultimately leading to lymphokine production. LCK also contributes to signaling by other receptor molecules. Associates directly with the cytoplasmic tail of CD2, which leads to hyperphosphorylation and activation of LCK. Also plays a role in the IL2 receptor-linked signaling pathway that controls the T-cell proliferative response. Binding of IL2 to its receptor results in increased activity of LCK. Is expressed at all stages of thymocyte development and is required for the regulation of maturation events that are governed by both pre-TCR and mature alpha beta TCR. Phosphorylates other substrates including RUNX3, PTK2B/PYK2, the microtubule-associated protein MAPT, RHOH or TYROBP. Interacts with UNC119; this interaction plays a crucial role in activation of LCK. The chain is Tyrosine-protein kinase Lck (LCK) from Aotus nancymaae (Ma's night monkey).